Here is a 127-residue protein sequence, read N- to C-terminus: Large-conductance mechanosensitive channel (127 aa).

Transmembrane regions (helical) follow at residues 14–34 and 69–89; these read VLDLAVGVIIGGAFTGLVKSL and GAFLNDVINFLITAFVVFLIV.

It belongs to the MscL family. Homopentamer.

Its subcellular location is the cell membrane. Channel that opens in response to stretch forces in the membrane lipid bilayer. May participate in the regulation of osmotic pressure changes within the cell. This chain is Large-conductance mechanosensitive channel, found in Leuconostoc mesenteroides subsp. mesenteroides (strain ATCC 8293 / DSM 20343 / BCRC 11652 / CCM 1803 / JCM 6124 / NCDO 523 / NBRC 100496 / NCIMB 8023 / NCTC 12954 / NRRL B-1118 / 37Y).